The following is a 486-amino-acid chain: Small ribosomal subunit protein uS4m (486 aa).

Residues 103–172 (KRLDFALFRA…AKKPSFQEAL (70 aa)) enclose the S4 RNA-binding domain.

The protein belongs to the universal ribosomal protein uS4 family. Component of the mitochondrial small ribosomal subunit (mt-SSU). Mature yeast 74S mitochondrial ribosomes consist of a small (37S) and a large (54S) subunit. The 37S small subunit contains a 15S ribosomal RNA (15S mt-rRNA) and 34 different proteins. The 54S large subunit contains a 21S rRNA (21S mt-rRNA) and 46 different proteins. uS3m, uS4m and uS5m form the narrow entry site of the mRNA channel.

It localises to the mitochondrion. In terms of biological role, component of the mitochondrial ribosome (mitoribosome), a dedicated translation machinery responsible for the synthesis of mitochondrial genome-encoded proteins, including at least some of the essential transmembrane subunits of the mitochondrial respiratory chain. The mitoribosomes are attached to the mitochondrial inner membrane and translation products are cotranslationally integrated into the membrane. This is Small ribosomal subunit protein uS4m (NAM9) from Saccharomyces cerevisiae (strain ATCC 204508 / S288c) (Baker's yeast).